A 156-amino-acid chain; its full sequence is ATP synthase subunit b 2 (156 aa).

The helical transmembrane segment at 11–31 (LLAFIFFVWFCMKFVWPPIMG) threads the bilayer.

Belongs to the ATPase B chain family. As to quaternary structure, F-type ATPases have 2 components, F(1) - the catalytic core - and F(0) - the membrane proton channel. F(1) has five subunits: alpha(3), beta(3), gamma(1), delta(1), epsilon(1). F(0) has three main subunits: a(1), b(2) and c(10-14). The alpha and beta chains form an alternating ring which encloses part of the gamma chain. F(1) is attached to F(0) by a central stalk formed by the gamma and epsilon chains, while a peripheral stalk is formed by the delta and b chains.

Its subcellular location is the cell inner membrane. F(1)F(0) ATP synthase produces ATP from ADP in the presence of a proton or sodium gradient. F-type ATPases consist of two structural domains, F(1) containing the extramembraneous catalytic core and F(0) containing the membrane proton channel, linked together by a central stalk and a peripheral stalk. During catalysis, ATP synthesis in the catalytic domain of F(1) is coupled via a rotary mechanism of the central stalk subunits to proton translocation. In terms of biological role, component of the F(0) channel, it forms part of the peripheral stalk, linking F(1) to F(0). This is ATP synthase subunit b 2 from Pseudoalteromonas atlantica (strain T6c / ATCC BAA-1087).